The following is a 247-amino-acid chain: NAD-dependent protein deacetylase (247 aa).

A Deacetylase sirtuin-type domain is found at 1–247; it reads METFKSILHE…EFARSLGMKK (247 aa). Ala-20, Thr-24, Phe-31, Arg-32, Gln-100, Ile-102, Asp-103, and His-118 together coordinate NAD(+). Residue Phe-31 coordinates nicotinamide. Positions 102 and 103 each coordinate nicotinamide. His-118 acts as the Proton acceptor in catalysis. Positions 126, 129, 146, and 156 each coordinate Zn(2+). The NAD(+) site is built by Thr-192, Ser-193, Asn-218, and Ile-236.

It belongs to the sirtuin family. Class U subfamily. It depends on Zn(2+) as a cofactor.

It is found in the cytoplasm. The enzyme catalyses N(6)-acetyl-L-lysyl-[protein] + NAD(+) + H2O = 2''-O-acetyl-ADP-D-ribose + nicotinamide + L-lysyl-[protein]. Its function is as follows. NAD-dependent protein deacetylase which modulates the activities of several enzymes which are inactive in their acetylated form. The chain is NAD-dependent protein deacetylase from Bacillus subtilis (strain 168).